Consider the following 418-residue polypeptide: Tektin-1 (418 aa).

4 coiled-coil regions span residues asparagine 20–glutamate 107, glutamine 134–aspartate 177, asparagine 266–glycine 308, and valine 332–isoleucine 383.

This sequence belongs to the tektin family. Microtubule inner protein component of sperm flagellar doublet microtubules. In terms of processing, ubiquitinated, leading to its degradation. Deubiquitinated by USP16, promoting its stability. Predominantly expressed in testis.

Its subcellular location is the cytoplasm. The protein resides in the cytoskeleton. The protein localises to the cilium axoneme. It localises to the flagellum axoneme. Its function is as follows. Microtubule inner protein (MIP) part of the dynein-decorated doublet microtubules (DMTs) in cilia and flagellar axoneme. Forms filamentous polymers in the walls of ciliary and flagellar microtubules. This Rattus norvegicus (Rat) protein is Tektin-1 (Tekt1).